We begin with the raw amino-acid sequence, 474 residues long: Aspartyl/glutamyl-tRNA(Asn/Gln) amidotransferase subunit B (474 aa).

This sequence belongs to the GatB/GatE family. GatB subfamily. Heterotrimer of A, B and C subunits.

It catalyses the reaction L-glutamyl-tRNA(Gln) + L-glutamine + ATP + H2O = L-glutaminyl-tRNA(Gln) + L-glutamate + ADP + phosphate + H(+). It carries out the reaction L-aspartyl-tRNA(Asn) + L-glutamine + ATP + H2O = L-asparaginyl-tRNA(Asn) + L-glutamate + ADP + phosphate + 2 H(+). Allows the formation of correctly charged Asn-tRNA(Asn) or Gln-tRNA(Gln) through the transamidation of misacylated Asp-tRNA(Asn) or Glu-tRNA(Gln) in organisms which lack either or both of asparaginyl-tRNA or glutaminyl-tRNA synthetases. The reaction takes place in the presence of glutamine and ATP through an activated phospho-Asp-tRNA(Asn) or phospho-Glu-tRNA(Gln). This is Aspartyl/glutamyl-tRNA(Asn/Gln) amidotransferase subunit B from Wolbachia pipientis wMel.